A 204-amino-acid polypeptide reads, in one-letter code: Casparian strip membrane protein 2 (204 aa).

Topologically, residues 1–42 (MKNESTFIDVPAESSSAMKGKAPLIGVARDHTTSGSGGYNRG) are cytoplasmic. Residues 43–63 (LAIFDFLLRLAAIVAALAAAA) traverse the membrane as a helical segment. At 64 to 92 (TMGTSDETLPFFTQFLQFEASYDDLPTFQ) the chain is on the extracellular side. The helical transmembrane segment at 93-113 (FFVIAMALVGGYLVLSLPISV) threads the bilayer. Residues 114–125 (VTILRPLATAPR) lie on the Cytoplasmic side of the membrane. The chain crosses the membrane as a helical span at residues 126 to 146 (LLLLVLDTGVLALNTAAASSA). The Extracellular segment spans residues 147 to 178 (AAISYLAHSGNQNTNWLPICQQFGDFCQKSSG). Residues 179-199 (AVVSAFVSVVFFTILVVISGV) traverse the membrane as a helical segment. The Cytoplasmic segment spans residues 200–204 (ALKRH).

Belongs to the Casparian strip membrane proteins (CASP) family. As to quaternary structure, homodimer and heterodimers with other CASP proteins. Interacts with CASP1, CASP3 and CASP4.

It localises to the cell membrane. Regulates membrane-cell wall junctions and localized cell wall deposition. Required for establishment of the Casparian strip membrane domain (CSD) and the subsequent formation of Casparian strips, a cell wall modification of the root endodermis that determines an apoplastic barrier between the intraorganismal apoplasm and the extraorganismal apoplasm and prevents lateral diffusion. In Arabidopsis thaliana (Mouse-ear cress), this protein is Casparian strip membrane protein 2 (CASP2).